The primary structure comprises 567 residues: Dihydroxy-acid dehydratase (567 aa).

Cys-52 provides a ligand contact to [2Fe-2S] cluster. Asp-84 is a binding site for Mg(2+). [2Fe-2S] cluster is bound at residue Cys-125. Mg(2+) contacts are provided by Asp-126 and Lys-127. N6-carboxylysine is present on Lys-127. [2Fe-2S] cluster is bound at residue Cys-197. Glu-448 provides a ligand contact to Mg(2+). Residue Ser-474 is the Proton acceptor of the active site.

The protein belongs to the IlvD/Edd family. In terms of assembly, homodimer. [2Fe-2S] cluster serves as cofactor. Mg(2+) is required as a cofactor.

The catalysed reaction is (2R)-2,3-dihydroxy-3-methylbutanoate = 3-methyl-2-oxobutanoate + H2O. The enzyme catalyses (2R,3R)-2,3-dihydroxy-3-methylpentanoate = (S)-3-methyl-2-oxopentanoate + H2O. It functions in the pathway amino-acid biosynthesis; L-isoleucine biosynthesis; L-isoleucine from 2-oxobutanoate: step 3/4. The protein operates within amino-acid biosynthesis; L-valine biosynthesis; L-valine from pyruvate: step 3/4. Functionally, functions in the biosynthesis of branched-chain amino acids. Catalyzes the dehydration of (2R,3R)-2,3-dihydroxy-3-methylpentanoate (2,3-dihydroxy-3-methylvalerate) into 2-oxo-3-methylpentanoate (2-oxo-3-methylvalerate) and of (2R)-2,3-dihydroxy-3-methylbutanoate (2,3-dihydroxyisovalerate) into 2-oxo-3-methylbutanoate (2-oxoisovalerate), the penultimate precursor to L-isoleucine and L-valine, respectively. The sequence is that of Dihydroxy-acid dehydratase from Streptococcus pneumoniae serotype 2 (strain D39 / NCTC 7466).